The sequence spans 393 residues: Glycocyamine kinase (393 aa).

The Phosphagen kinase N-terminal domain maps to 7–94; it reads REKFAKENFP…FDRVIEEIHH (88 aa). The Phosphagen kinase C-terminal domain maps to 120-362; that stretch reads YVKSCRIRCG…NVLIEADKRL (243 aa). ATP is bound by residues 123–127, His186, Arg231, 287–291, 315–320, and Asp330; these read SCRIR, RASVH, and RGTGGE. The tract at residues 367-393 is disordered; that stretch reads PIDDLTPRLNSSTGTSISATASRHMTL. Residues 377 to 393 are compositionally biased toward low complexity; the sequence is SSTGTSISATASRHMTL.

This sequence belongs to the ATP:guanido phosphotransferase family. Monomer.

The enzyme catalyses guanidinoacetate + ATP = phosphoguanidinoacetate + ADP + H(+). In Hediste diversicolor (Sandworm), this protein is Glycocyamine kinase.